A 351-amino-acid polypeptide reads, in one-letter code: Putative phospho-N-acetylmuramoyl-pentapeptide-transferase (351 aa).

The next 10 membrane-spanning stretches (helical) occupy residues 2–22, 44–64, 71–91, 158–178, 181–201, 212–232, 235–255, 258–278, 281–301, and 328–348; these read MEFLMVFIISTVSAAVFTLFI, AGTPTMGGLGMLLALLLVTVL, LVLTSLIVLTAAIVGLLDDLL, GEKILAQLLIGVFLVLSGAVG, GGFYLGLAAAPIAIAGMVGAI, GMAAGIMLIASLSCAIFLGLS, ALPFLALAGMCAGFLVFNRHP, IFMGDTGSFALGAGYATAVML, TVYFGVLAIAVPVVSVIVSLL, and IVLLYWLITLIVCALGLYMTG.

It belongs to the glycosyltransferase 4 family. MraY subfamily. It depends on Mg(2+) as a cofactor.

It localises to the cell membrane. The enzyme catalyses UDP-N-acetyl-alpha-D-muramoyl-L-alanyl-gamma-D-glutamyl-meso-2,6-diaminopimeloyl-D-alanyl-D-alanine + di-trans,octa-cis-undecaprenyl phosphate = di-trans,octa-cis-undecaprenyl diphospho-N-acetyl-alpha-D-muramoyl-L-alanyl-D-glutamyl-meso-2,6-diaminopimeloyl-D-alanyl-D-alanine + UMP. This chain is Putative phospho-N-acetylmuramoyl-pentapeptide-transferase, found in Methanothermobacter thermautotrophicus (strain ATCC 29096 / DSM 1053 / JCM 10044 / NBRC 100330 / Delta H) (Methanobacterium thermoautotrophicum).